The chain runs to 1523 residues: Slit homolog 3 protein (1523 aa).

The first 33 residues, 1 to 33 (MAPGRTGAGAAVRARLALALALASILSGPPAAA), serve as a signal peptide directing secretion. Positions 34–61 (CPTKCTCSAASVDCHGLGLRAVPRGIPR) constitute an LRRNT domain. 6 LRR repeats span residues 62–83 (NAERLDLDRNNITRITKMDFTG), 86–107 (NLRVLHLEDNQVSVIERGAFQD), 110–131 (QLERLRLNKNKLQVLPELLFQS), 134–155 (KLTRLDLSENQIQGIPRKAFRG), 158–179 (GVKNLQLDNNHISCIEDGAFRA), and 182–203 (DLEILTLNNNNISRILVTSFNH). An N-linked (GlcNAc...) asparagine glycan is attached at asparagine 72. N-linked (GlcNAc...) asparagine glycosylation is present at asparagine 192. One can recognise an LRRCT 1 domain in the interval 215–265 (NHLYCDCHLAWLSDWLRQRRTIGQFTLCMAPVHLRGFSVADVQKKEYVCPG). Residues 271 to 307 (PACNANSLSCPSACSCSNNIVDCRGKGLTEIPANLPE) enclose the LRRNT 2 domain. Cysteines 284 and 293 form a disulfide. 5 LRR repeats span residues 308-329 (GIVEIRLEQNSIKSIPAGAFIQ), 332-353 (KLKRIDISKNQISDIAPDAFQG), 356-377 (SLTSLVLYGNKITEIPKGLFDG), 380-401 (SLQLLLLNANKINCLRVNTFQD), and 404-425 (NLNLLSLYDNKLQTISKGLFAP). The 51-residue stretch at 437–487 (NPFVCDCHLKWLADYLQDNPIETSGARCSSPRRLANKRISQIKSKKFRCSG) folds into the LRRCT 2 domain. 4 disulfide bridges follow: cysteine 441–cysteine 464, cysteine 443–cysteine 485, cysteine 505–cysteine 511, and cysteine 509–cysteine 518. The 37-residue stretch at 496-532 (SSECFMDLVCPEKCRCEGTIVDCSNQKLSRIPSHLPE) folds into the LRRNT 3 domain. LRR repeat units lie at residues 533–554 (YTTDLRLNDNDIAVLEATGIFK), 558–579 (NLRKINLSNNRIKEVREGAFDG), 582–603 (GVQELMLTGNQLETMHGRMFRG), 606–627 (GLKTLMLRSNLISCVNNDTFAG), and 630–651 (SVRLLSLYDNRITTISPGAFTT). Residue asparagine 563 is glycosylated (N-linked (GlcNAc...) asparagine). The N-linked (GlcNAc...) asparagine glycan is linked to asparagine 622. An LRRCT 3 domain is found at 663-713 (NPFNCNCHMAWLGRWLRKRRIVSGNPRCQKPFFLKEIPIQDVAIQDFTCEG). 2 disulfide bridges follow: cysteine 667/cysteine 690 and cysteine 669/cysteine 711. The region spanning 716-752 (ENSCQLSPRCPEQCTCVETVVRCSNRGLHTLPKGMPK) is the LRRNT 4 domain. LRR repeat units lie at residues 753-774 (DVTELYLEGNHLTAVPKELSTF), 776-797 (QLTLIDLSNNSISMLTNHTFSN), 800-821 (HLSTLILSYNRLRCIPVHAFNG), and 824-845 (SLRVLTLHGNDISSVPEGSFND). N-linked (GlcNAc...) asparagine glycans are attached at residues asparagine 784, asparagine 792, and asparagine 797. Positions 857 to 907 (NPLHCDCSLRWLSEWIKAGYKEPGIARCSSPESMADRLLLTTPTHRFQCKG) constitute an LRRCT 4 domain. 6 consecutive EGF-like domains span residues 918-953 (NACLSSPCKNNGTCSQDPVEQYRCTCPYSYKGKDCT), 955-994 (PINTCVQNPCQHGGTCHLSESHRDGFSCSCPLGFEGQRCE), 996-1032 (NPDDCEDNDCENSATCVDGINNYACVCPPNYTGELCD), 1034-1072 (VIDYCVPEMNLCQHEAKCISLDKGFRCECVPGYSGKLCE), 1074-1110 (DNDDCVAHKCRHGAQCVDAVNGYTCICPQGFSGLFCE), and 1119-1155 (QTSPCDQYECQNGAQCIVVQQEPTCRCPPGFAGPRCE). 18 cysteine pairs are disulfide-bonded: cysteine 920/cysteine 931, cysteine 925/cysteine 941, cysteine 943/cysteine 952, cysteine 959/cysteine 970, cysteine 964/cysteine 982, cysteine 984/cysteine 993, cysteine 1000/cysteine 1011, cysteine 1005/cysteine 1020, cysteine 1022/cysteine 1031, cysteine 1038/cysteine 1051, cysteine 1045/cysteine 1060, cysteine 1062/cysteine 1071, cysteine 1078/cysteine 1089, cysteine 1083/cysteine 1098, cysteine 1100/cysteine 1109, cysteine 1123/cysteine 1134, cysteine 1128/cysteine 1143, and cysteine 1145/cysteine 1154. Asparagine 928 carries an N-linked (GlcNAc...) asparagine glycan. Asparagine 1025 is a glycosylation site (N-linked (GlcNAc...) asparagine). A Laminin G-like domain is found at 1158–1332 (ITVNFVGKDS…PQSLGVSPGC (175 aa)). N-linked (GlcNAc...) asparagine glycosylation is found at asparagine 1181 and asparagine 1247. 5 disulfides stabilise this stretch: cysteine 1305–cysteine 1332, cysteine 1355–cysteine 1364, cysteine 1372–cysteine 1382, cysteine 1377–cysteine 1391, and cysteine 1393–cysteine 1402. EGF-like domains are found at residues 1340 to 1365 (HGLCRSVEKDSVVCECHPGWTGPLCD) and 1368 to 1403 (AQDPCLGHSCSHGTCVATGNSYVCKCAEGYEGPLCD). N-linked (GlcNAc...) asparagine glycosylation is present at asparagine 1406. The region spanning 1408 to 1444 (SANACSAFKCHHGQCHISDRGEPYCLCQPGFSGNHCE) is the EGF-like 9 domain. 7 disulfide bridges follow: cysteine 1412–cysteine 1422, cysteine 1417–cysteine 1432, cysteine 1434–cysteine 1443, cysteine 1449–cysteine 1487, cysteine 1467–cysteine 1501, cysteine 1478–cysteine 1517, and cysteine 1482–cysteine 1519. In terms of domain architecture, CTCK spans 1449–1523 (CLGEIVREAI…HLECGCRECS (75 aa)).

The protein localises to the secreted. Functionally, may act as molecular guidance cue in cellular migration, and function may be mediated by interaction with roundabout homolog receptors. The chain is Slit homolog 3 protein (Slit3) from Rattus norvegicus (Rat).